A 316-amino-acid chain; its full sequence is ATP synthase gamma chain (316 aa).

The protein belongs to the ATPase gamma chain family. As to quaternary structure, F-type ATPases have 2 components, CF(1) - the catalytic core - and CF(0) - the membrane proton channel. CF(1) has five subunits: alpha(3), beta(3), gamma(1), delta(1), epsilon(1). CF(0) has three main subunits: a, b and c.

It localises to the cellular thylakoid membrane. In terms of biological role, produces ATP from ADP in the presence of a proton gradient across the membrane. The gamma chain is believed to be important in regulating ATPase activity and the flow of protons through the CF(0) complex. The sequence is that of ATP synthase gamma chain from Prochlorococcus marinus (strain MIT 9515).